The sequence spans 378 residues: Probable 3-hydroxyisobutyryl-CoA hydrolase 3 (378 aa).

Substrate contacts are provided by Glu-138 and Asp-146.

This sequence belongs to the enoyl-CoA hydratase/isomerase family.

The protein resides in the peroxisome. It catalyses the reaction 3-hydroxy-2-methylpropanoyl-CoA + H2O = 3-hydroxy-2-methylpropanoate + CoA + H(+). Its pathway is amino-acid degradation; L-valine degradation. In terms of biological role, involved in valine catabolism. This chain is Probable 3-hydroxyisobutyryl-CoA hydrolase 3, found in Arabidopsis thaliana (Mouse-ear cress).